Here is a 104-residue protein sequence, read N- to C-terminus: Large ribosomal subunit protein bL21 (104 aa).

This sequence belongs to the bacterial ribosomal protein bL21 family. As to quaternary structure, part of the 50S ribosomal subunit. Contacts protein L20.

Functionally, this protein binds to 23S rRNA in the presence of protein L20. In Helicobacter pylori (strain G27), this protein is Large ribosomal subunit protein bL21.